Reading from the N-terminus, the 323-residue chain is Aldo-keto reductase family 1 member C4 (323 aa).

NADP(+) contacts are provided by residues 20-24 and aspartate 50; that span reads GFGTY. Tyrosine 55 serves as the catalytic Proton donor. Position 117 (histidine 117) interacts with substrate. NADP(+)-binding positions include 166-167, glutamine 190, 216-221, and 270-280; these read SN, HSALGT, and KSYNEQRIREN.

The protein belongs to the aldo/keto reductase family. As to quaternary structure, monomer.

Its subcellular location is the cytoplasm. The protein localises to the cytosol. It carries out the reaction chlordecone alcohol + NADP(+) = chlordecone + NADPH + H(+). It catalyses the reaction a 3alpha-hydroxysteroid + NADP(+) = a 3-oxosteroid + NADPH + H(+). The enzyme catalyses a 3alpha-hydroxysteroid + NAD(+) = a 3-oxosteroid + NADH + H(+). The catalysed reaction is 5alpha-androstane-3alpha,17beta-diol + NADP(+) = 17beta-hydroxy-5alpha-androstan-3-one + NADPH + H(+). It carries out the reaction 5alpha-androstane-3beta,17beta-diol + NADP(+) = 17beta-hydroxy-5alpha-androstan-3-one + NADPH + H(+). It catalyses the reaction 5alpha-androstane-3alpha,17beta-diol + NAD(+) = 17beta-hydroxy-5alpha-androstan-3-one + NADH + H(+). The enzyme catalyses 17beta-estradiol + NADP(+) = estrone + NADPH + H(+). The catalysed reaction is 17beta-estradiol + NAD(+) = estrone + NADH + H(+). It carries out the reaction (20S)-hydroxypregn-4-en-3-one + NADP(+) = progesterone + NADPH + H(+). It catalyses the reaction (20S)-hydroxypregn-4-en-3-one + NAD(+) = progesterone + NADH + H(+). The enzyme catalyses androsterone + NADP(+) = 5alpha-androstan-3,17-dione + NADPH + H(+). The catalysed reaction is testosterone + NADP(+) = androst-4-ene-3,17-dione + NADPH + H(+). It carries out the reaction testosterone + NAD(+) = androst-4-ene-3,17-dione + NADH + H(+). It catalyses the reaction 3alpha-hydroxy-5alpha-androstane 17-O-(beta-D-glucuronate) + NADP(+) = 5alpha-dihydrotestosterone 17-O-(beta-D-glucuronate) + NADPH + H(+). The enzyme catalyses (3beta,5alpha,17beta)-3-hydroxy-androstan-17-yl sulfate + NADP(+) = 5alpha-dihydrotestosterone sulfate + NADPH + H(+). The catalysed reaction is 5alpha-androstane-3alpha,17beta-diol + NAD(+) = androsterone + NADH + H(+). Its pathway is steroid metabolism. Functionally, cytosolic aldo-keto reductase that catalyzes the NADH and NADPH-dependent reduction of ketosteroids to hydroxysteroids. Liver specific enzyme that acts as an NAD(P)(H)-dependent 3-, 17- and 20-ketosteroid reductase on the steroid nucleus and side chain. Displays the ability to catalyze both oxidation and reduction in vitro, but most probably acts as a reductase in vivo since the oxidase activity measured in vitro is inhibited by physiological concentration of NADPH. Acts preferentially as a 3-alpha-hydroxysteroid dehydrogenase (HSD) with a subsidiary 3-beta-HSD activity. Catalyzes efficiently the transformation of the potent androgen 5-alpha-dihydrotestosterone (5alpha-DHT or 17beta-hydroxy-5alpha-androstan-3-one) into the less active form, 5-alpha-androstan-3-alpha,17-beta-diol (3-alpha-diol). Catalyzes the reduction of estrone into 17beta-estradiol but with low efficiency. Metabolizes a broad spectrum of natural and synthetic therapeutic steroid and plays an important role in metabolism of androgens, estrogens, progestereone and conjugated steroids. Catalyzes the biotransformation of the pesticide chlordecone (kepone) to its corresponding alcohol leading to increased biliary excretion of the pesticide and concomitant reduction of its neurotoxicity since bile is the major excretory route. The chain is Aldo-keto reductase family 1 member C4 (AKR1C4) from Macaca fascicularis (Crab-eating macaque).